The following is a 275-amino-acid chain: Probable ribosomal RNA small subunit methyltransferase A (275 aa).

Positions 13, 38, 59, 84, and 101 each coordinate S-adenosyl-L-methionine.

It belongs to the class I-like SAM-binding methyltransferase superfamily. rRNA adenine N(6)-methyltransferase family. RsmA subfamily.

The protein resides in the cytoplasm. In terms of biological role, specifically dimethylates two adjacent adenosines in the loop of a conserved hairpin near the 3'-end of 16S rRNA in the 30S particle. May play a critical role in biogenesis of 30S subunits. The chain is Probable ribosomal RNA small subunit methyltransferase A from Methanocaldococcus jannaschii (strain ATCC 43067 / DSM 2661 / JAL-1 / JCM 10045 / NBRC 100440) (Methanococcus jannaschii).